A 2058-amino-acid polypeptide reads, in one-letter code: Unconventional myosin-X (2058 aa).

Residue methionine 1 is modified to N-acetylmethionine. Residues 63 to 739 (EGVDDMASLT…LEQKLEKRRE (677 aa)) form the Myosin motor domain. Residues asparagine 104, tyrosine 113, 160 to 165 (GAGKTE), and asparagine 215 each bind ATP. Positions 619–641 (LHSLMATLSSSNPFFVRCIKPNM) are actin-binding. IQ domains are found at residues 742-763 (VSHA…KQYR), 764-787 (KVLY…RFLH), and 788-817 (LKKA…EKRE). The interval 814–883 (EKREQEEKKK…LTRELEKQKE (70 aa)) is SAH. Disordered regions lie at residues 819-840 (EEKK…RERE) and 847-866 (ELRA…EALQ). Basic and acidic residues predominate over residues 847–861 (ELRAQQEEETRKQQE). A coiled-coil region spans residues 884–934 (NKQVEEILRLEKEIEDLQRMKEQQELSLTEASLQKLQERRDQELRRLEEEA). 3 positions are modified to phosphoserine: serine 962, serine 965, and serine 968. Residues 964 to 1090 (GSEFSSELAE…DLPSPDGDYD (127 aa)) are disordered. Acidic residues predominate over residues 989–1003 (PEEEVDEGFEADDDA). A compositionally biased stretch (polar residues) spans 1040 to 1049 (VVPTSPSADS). Residues 1060–1071 (SGSLHNSSSGES) are compositionally biased toward low complexity. Threonine 1158 is modified (phosphothreonine). PH domains lie at 1212–1310 (EALK…QVHA) and 1392–1497 (EFIV…NVTD). The MyTH4 domain maps to 1547-1695 (LPYGDINLNL…PSRDEIEALI (149 aa)). An FERM domain is found at 1700–2044 (MTSTVYCHGG…AYISMIVKKR (345 aa)).

The protein belongs to the TRAFAC class myosin-kinesin ATPase superfamily. Myosin family. In terms of assembly, monomer, when in an inactive conformation in the cytosol. Homodimer in its active, membrane-bound conformation; antiparallel coiled coil-mediated dimer formation. Interacts strongly with CALM3 and weakly with CALM, the CALM3 interaction is essential for function in filopodial extension and motility. Interacts with ECPAS. Interacts with NEO1. Interacts with ITGB1 and ITGB3. Interacts with VASP. Interacts with DCC and ITGB5; the presence of DCC inhibits ITGB5 binding. Interacts with tubulin; ITGB5 or DCC binding inhibits tubulin binding. The initiator methionine for isoform Headless is removed. As to expression, ubiquitous.

The protein resides in the cytoplasm. It is found in the cytosol. The protein localises to the cell projection. It localises to the lamellipodium. Its subcellular location is the ruffle. The protein resides in the cytoskeleton. It is found in the filopodium tip. The protein localises to the cell cortex. It localises to the filopodium membrane. In terms of biological role, myosins are actin-based motor molecules with ATPase activity. Unconventional myosins serve in intracellular movements. MYO10 binds to actin filaments and actin bundles and functions as a plus end-directed motor. Moves with higher velocity and takes larger steps on actin bundles than on single actin filaments. The tail domain binds to membranous compartments containing phosphatidylinositol 3,4,5-trisphosphate or integrins, and mediates cargo transport along actin filaments. Regulates cell shape, cell spreading and cell adhesion. Stimulates the formation and elongation of filopodia. In hippocampal neurons it induces the formation of dendritic filopodia by trafficking the actin-remodeling protein VASP to the tips of filopodia, where it promotes actin elongation. Plays a role in formation of the podosome belt in osteoclasts. Functionally, functions as a dominant-negative regulator of isoform 1, suppressing its filopodia-inducing and axon outgrowth-promoting activities. In hippocampal neurons, it increases VASP retention in spine heads to induce spine formation and spine head expansion. This is Unconventional myosin-X (MYO10) from Homo sapiens (Human).